The primary structure comprises 222 residues: uncharacterized protein (222 aa).

An HTH gntR-type domain is found at 8–77 (AKKNQIIYRY…NTPGYFVCKD (70 aa)).

This is an uncharacterized protein from Mycoplasma genitalium (strain ATCC 33530 / DSM 19775 / NCTC 10195 / G37) (Mycoplasmoides genitalium).